A 212-amino-acid polypeptide reads, in one-letter code: Thiamine-phosphate synthase (212 aa).

38-42 (QLREK) contacts 4-amino-2-methyl-5-(diphosphooxymethyl)pyrimidine. Residues Asp-71 and Asp-90 each contribute to the Mg(2+) site. Lys-138 lines the 4-amino-2-methyl-5-(diphosphooxymethyl)pyrimidine pocket. 2-[(2R,5Z)-2-carboxy-4-methylthiazol-5(2H)-ylidene]ethyl phosphate is bound at residue Gly-166.

Belongs to the thiamine-phosphate synthase family. It depends on Mg(2+) as a cofactor.

The catalysed reaction is 2-[(2R,5Z)-2-carboxy-4-methylthiazol-5(2H)-ylidene]ethyl phosphate + 4-amino-2-methyl-5-(diphosphooxymethyl)pyrimidine + 2 H(+) = thiamine phosphate + CO2 + diphosphate. It carries out the reaction 2-(2-carboxy-4-methylthiazol-5-yl)ethyl phosphate + 4-amino-2-methyl-5-(diphosphooxymethyl)pyrimidine + 2 H(+) = thiamine phosphate + CO2 + diphosphate. It catalyses the reaction 4-methyl-5-(2-phosphooxyethyl)-thiazole + 4-amino-2-methyl-5-(diphosphooxymethyl)pyrimidine + H(+) = thiamine phosphate + diphosphate. It functions in the pathway cofactor biosynthesis; thiamine diphosphate biosynthesis; thiamine phosphate from 4-amino-2-methyl-5-diphosphomethylpyrimidine and 4-methyl-5-(2-phosphoethyl)-thiazole: step 1/1. Its function is as follows. Condenses 4-methyl-5-(beta-hydroxyethyl)thiazole monophosphate (THZ-P) and 2-methyl-4-amino-5-hydroxymethyl pyrimidine pyrophosphate (HMP-PP) to form thiamine monophosphate (TMP). This is Thiamine-phosphate synthase from Chlamydia caviae (strain ATCC VR-813 / DSM 19441 / 03DC25 / GPIC) (Chlamydophila caviae).